The primary structure comprises 799 residues: Ribonucleoside-diphosphate reductase large subunit (799 aa).

Substrate is bound by residues Thr192, 207 to 208 (SC), Gly238, 408 to 412 (NLCAE), and 612 to 616 (PTAGT). Cysteines 208 and 424 form a disulfide. Asn408 serves as the catalytic Proton acceptor. Cys410 (cysteine radical intermediate) is an active-site residue. Glu412 acts as the Proton acceptor in catalysis. Residues 765 to 799 (PDSGDGVGGYKGGDEEPRSPEHAQCESPDRCLSCQ) are disordered. The span at 776 to 793 (GGDEEPRSPEHAQCESPD) shows a compositional bias: basic and acidic residues.

It belongs to the ribonucleoside diphosphate reductase large chain family. As to quaternary structure, heterotetramer composed of a homodimer of the large subunit (R1) and a homodimer of the small subunit (R2). Larger multisubunit protein complex are also active, composed of (R1)n(R2)n.

The enzyme catalyses a 2'-deoxyribonucleoside 5'-diphosphate + [thioredoxin]-disulfide + H2O = a ribonucleoside 5'-diphosphate + [thioredoxin]-dithiol. Its function is as follows. Ribonucleoside-diphosphate reductase holoenzyme provides the precursors necessary for viral DNA synthesis. Allows virus growth in non-dividing cells, as well as reactivation from latency in infected hosts. Catalyzes the biosynthesis of deoxyribonucleotides from the corresponding ribonucleotides. This chain is Ribonucleoside-diphosphate reductase large subunit, found in Equine herpesvirus 2 (strain 86/87) (EHV-2).